A 207-amino-acid chain; its full sequence is Small ribosomal subunit protein uS4 (207 aa).

Positions 31–53 (KAKFDSKPGQHGRTSGARTSDFG) are disordered. The 64-residue stretch at 97–160 (SRLDNVVYRM…KKQNRIVEAL (64 aa)) folds into the S4 RNA-binding domain.

The protein belongs to the universal ribosomal protein uS4 family. In terms of assembly, part of the 30S ribosomal subunit. Contacts protein S5. The interaction surface between S4 and S5 is involved in control of translational fidelity.

In terms of biological role, one of the primary rRNA binding proteins, it binds directly to 16S rRNA where it nucleates assembly of the body of the 30S subunit. With S5 and S12 plays an important role in translational accuracy. The sequence is that of Small ribosomal subunit protein uS4 from Albidiferax ferrireducens (strain ATCC BAA-621 / DSM 15236 / T118) (Rhodoferax ferrireducens).